A 449-amino-acid chain; its full sequence is Chromosomal replication initiator protein DnaA (449 aa).

Residues 1-75 are domain I, interacts with DnaA modulators; sequence MDTNNDIEKR…EILSQNKVGM (75 aa). The segment at 75-106 is domain II; that stretch reads MHLAHSVDVRIEVASKVHVSDHSNINYKATKS. The tract at residues 107 to 321 is domain III, AAA+ region; it reads SIKDSYTFEN…GAIIKISVNA (215 aa). ATP-binding residues include G151, G153, K154, and T155. The interval 322–449 is domain IV, binds dsDNA; it reads NLMNAPIDLN…LNELNDKKQH (128 aa).

It belongs to the DnaA family. Oligomerizes as a right-handed, spiral filament on DNA at oriC.

The protein localises to the cytoplasm. Its function is as follows. Plays an essential role in the initiation and regulation of chromosomal replication. ATP-DnaA binds to the origin of replication (oriC) to initiate formation of the DNA replication initiation complex once per cell cycle. Binds the DnaA box (a 9 base pair repeat at the origin) and separates the double-stranded (ds)DNA. Forms a right-handed helical filament on oriC DNA; dsDNA binds to the exterior of the filament while single-stranded (ss)DNA is stabiized in the filament's interior. The ATP-DnaA-oriC complex binds and stabilizes one strand of the AT-rich DNA unwinding element (DUE), permitting loading of DNA polymerase. After initiation quickly degrades to an ADP-DnaA complex that is not apt for DNA replication. Binds acidic phospholipids. This is Chromosomal replication initiator protein DnaA from Helicobacter acinonychis (strain Sheeba).